A 140-amino-acid polypeptide reads, in one-letter code: Nucleoside diphosphate kinase (140 aa).

ATP contacts are provided by lysine 11, phenylalanine 59, arginine 87, threonine 93, arginine 104, and asparagine 114. Histidine 117 functions as the Pros-phosphohistidine intermediate in the catalytic mechanism.

Belongs to the NDK family. Homotetramer. Mg(2+) is required as a cofactor.

Its subcellular location is the cytoplasm. The enzyme catalyses a 2'-deoxyribonucleoside 5'-diphosphate + ATP = a 2'-deoxyribonucleoside 5'-triphosphate + ADP. The catalysed reaction is a ribonucleoside 5'-diphosphate + ATP = a ribonucleoside 5'-triphosphate + ADP. In terms of biological role, major role in the synthesis of nucleoside triphosphates other than ATP. The ATP gamma phosphate is transferred to the NDP beta phosphate via a ping-pong mechanism, using a phosphorylated active-site intermediate. In Xanthobacter autotrophicus (strain ATCC BAA-1158 / Py2), this protein is Nucleoside diphosphate kinase.